The following is a 137-amino-acid chain: Large ribosomal subunit protein bL17 (137 aa).

This sequence belongs to the bacterial ribosomal protein bL17 family. As to quaternary structure, part of the 50S ribosomal subunit. Contacts protein L32.

This chain is Large ribosomal subunit protein bL17, found in Caulobacter vibrioides (strain ATCC 19089 / CIP 103742 / CB 15) (Caulobacter crescentus).